The following is a 315-amino-acid chain: Protein FRA10AC1 homolog (315 aa).

Met1 is subject to N-acetylmethionine. A disordered region spans residues 1 to 28 (MHGHGGYDSDFSDDEQGGGSSKKRKKTV). Phosphoserine is present on residues Ser9 and Ser12. Lys36 carries the N6-acetyllysine modification. Positions 225–235 (KEIKSTKKKSK) are enriched in basic residues. Residues 225–308 (KEIKSTKKKS…EKSQEEEFDD (84 aa)) form a disordered region. Composition is skewed to basic and acidic residues over residues 236–245 (TTPECDESPR) and 255–278 (EASK…NRNA). 2 positions are modified to phosphoserine: Ser283 and Ser285.

In terms of assembly, interacts with ESS2.

Its subcellular location is the nucleus. In terms of biological role, may be involved in pre-mRNA splicing. This is Protein FRA10AC1 homolog (Fra10ac1) from Mus musculus (Mouse).